Consider the following 68-residue polypeptide: Large ribosomal subunit protein uL29 (68 aa).

Belongs to the universal ribosomal protein uL29 family.

The polypeptide is Large ribosomal subunit protein uL29 (Limosilactobacillus fermentum (strain NBRC 3956 / LMG 18251) (Lactobacillus fermentum)).